The chain runs to 119 residues: Holo-[acyl-carrier-protein] synthase (119 aa).

Positions 8 and 59 each coordinate Mg(2+).

Belongs to the P-Pant transferase superfamily. AcpS family. Mg(2+) serves as cofactor.

The protein localises to the cytoplasm. The enzyme catalyses apo-[ACP] + CoA = holo-[ACP] + adenosine 3',5'-bisphosphate + H(+). In terms of biological role, transfers the 4'-phosphopantetheine moiety from coenzyme A to a Ser of acyl-carrier-protein. The sequence is that of Holo-[acyl-carrier-protein] synthase from Streptococcus agalactiae serotype Ia (strain ATCC 27591 / A909 / CDC SS700).